We begin with the raw amino-acid sequence, 1304 residues long: DNA-directed RNA polymerase subunit beta' (1304 aa).

The disordered stretch occupies residues 1 to 23 (MSEKGRFSAGLSRQAADGNKADA). Zn(2+) is bound by residues Cys241, Cys315, Cys322, and Cys325. Residues 1256–1268 (AAEPEPDEEEEEP) show a composition bias toward acidic residues. The tract at residues 1256 to 1304 (AAEPEPDEEEEEPAVLPELPPRLILEDDQLIDDSTPAFDELEEDDDEEE) is disordered. Over residues 1269-1278 (AVLPELPPRL) the composition is skewed to low complexity. Over residues 1294–1304 (DELEEDDDEEE) the composition is skewed to acidic residues.

This sequence belongs to the RNA polymerase beta' chain family. RpoC2 subfamily. In terms of assembly, in cyanobacteria the RNAP catalytic core is composed of 2 alpha, 1 beta, 1 beta', 1 gamma and 1 omega subunit. When a sigma factor is associated with the core the holoenzyme is formed, which can initiate transcription. It depends on Zn(2+) as a cofactor.

It catalyses the reaction RNA(n) + a ribonucleoside 5'-triphosphate = RNA(n+1) + diphosphate. Its function is as follows. DNA-dependent RNA polymerase catalyzes the transcription of DNA into RNA using the four ribonucleoside triphosphates as substrates. The chain is DNA-directed RNA polymerase subunit beta' from Synechococcus sp. (strain JA-2-3B'a(2-13)) (Cyanobacteria bacterium Yellowstone B-Prime).